The chain runs to 800 residues: Putative antiporter subunit mnhA2 (800 aa).

20 helical membrane-spanning segments follow: residues Met-1 to Ser-21, Ile-33 to Ala-53, Gly-78 to Ala-98, Leu-118 to Phe-138, Phe-167 to Met-187, Gly-207 to Phe-227, Thr-241 to Leu-261, Tyr-273 to Leu-293, Gly-300 to Gly-320, Ile-331 to Ile-351, Leu-387 to Ser-407, Phe-424 to Phe-444, Pro-472 to Val-492, Gly-527 to Ile-547, Ile-595 to Leu-615, Gly-627 to Ile-647, Leu-651 to Met-671, Leu-676 to Ser-696, Ile-712 to Thr-732, and Leu-768 to Leu-788.

Belongs to the CPA3 antiporters (TC 2.A.63) subunit A family. May form a heterooligomeric complex that consists of seven subunits: mnhA2, mnhB2, mnhC2, mnhD2, mnhE2, mnhF2 and mnhG2.

Its subcellular location is the cell membrane. This Staphylococcus aureus (strain MSSA476) protein is Putative antiporter subunit mnhA2 (mnhA2).